The following is a 100-amino-acid chain: MIGLNHYLIVSGLLFCIGLAGMLKRKNILLLFFSTEIMLNAINIGFIAISKYIHNLDGQMFALFIIAIAASEVAIGLGLVILWFKKFKSLDIDSLNAMKG.

Transmembrane regions (helical) follow at residues 1–21 (MIGL…GLAG), 28–48 (ILLL…GFIA), and 64–84 (FIIA…ILWF).

This sequence belongs to the complex I subunit 4L family. As to quaternary structure, NDH-1 is composed of 14 different subunits. Subunits NuoA, H, J, K, L, M, N constitute the membrane sector of the complex.

The protein resides in the cell inner membrane. It catalyses the reaction a quinone + NADH + 5 H(+)(in) = a quinol + NAD(+) + 4 H(+)(out). Its function is as follows. NDH-1 shuttles electrons from NADH, via FMN and iron-sulfur (Fe-S) centers, to quinones in the respiratory chain. The immediate electron acceptor for the enzyme in this species is believed to be ubiquinone. Couples the redox reaction to proton translocation (for every two electrons transferred, four hydrogen ions are translocated across the cytoplasmic membrane), and thus conserves the redox energy in a proton gradient. The sequence is that of NADH-quinone oxidoreductase subunit K from Helicobacter acinonychis (strain Sheeba).